The sequence spans 222 residues: N-acetyltransferase 8B (222 aa).

Over 1–42 (MVSYHICEYQDSDYKSVVDVFTKGAEEYIPSTFRHLLLLPRT) the chain is Cytoplasmic. A helical; Signal-anchor for type II membrane protein membrane pass occupies residues 43–67 (LLLLLGVSLALVLVSGSWLLAVVCI). The N-acetyltransferase domain maps to 62–217 (LAVVCIFFLL…VGIRFVQLNY (156 aa)). Residues 68–222 (FFLLPFLWFL…VQLNYSFPSA (155 aa)) are Lumenal-facing. Lysine 99 carries the post-translational modification N6-acetyllysine.

It belongs to the NAT8 family. In terms of processing, acetylation on Lys-99 modulates enzymatic activity.

The protein resides in the endoplasmic reticulum-Golgi intermediate compartment membrane. It is found in the endoplasmic reticulum membrane. It carries out the reaction L-lysyl-[protein] + acetyl-CoA = N(6)-acetyl-L-lysyl-[protein] + CoA + H(+). Endoplasmic reticulum (ER)-membrane-bound lysine N-acetyltransferase catalyzing the N6-acetylation of lysine residues in the lumen of the ER in various proteins, including PROM1 and BACE1, using acetyl-CoA as acetyl donor. Thereby, may regulate apoptosis through the acetylation and the regulation of the expression of PROM1. Acetylates and stabilizes BACE1 immature protein, leading to increased steady-state levels in neurons. By acting on BACE1 expression, may regulate amyloid beta-peptide formation. N(6)-lysine acetylation in ER maintains protein homeostasis and regulates reticulophagy. The chain is N-acetyltransferase 8B from Rattus norvegicus (Rat).